We begin with the raw amino-acid sequence, 180 residues long: MIIYLHGFDSNSPGNHEKVLQLQFIDPDVRLISYSTRHPKHDMQHLLKEVDKMLQLNVDERPLICGVGLGGYWAERIGFLCDIRQVVFNPNLFPEENMEGKIDRPEEYADIATKCVSNFREKNRDRCLAILSRQDEALNSHRAAEFLHHYYEIVWDEEQTHKFKNISPHLQRIKAFKTLG.

It belongs to the UPF0227 family.

The chain is UPF0227 protein Ent638_1623 from Enterobacter sp. (strain 638).